A 237-amino-acid chain; its full sequence is U2 small nuclear ribonucleoprotein A' (237 aa).

3 LRR repeats span residues 53–74 (RTNI…GHND), 75–95 (TVHT…SRLP), and 97–118 (YLVN…QGLR). Residues 132–170 (NVICHKEQYRETVIALCPQLAVLDGERVRQAERQAAPQN) form the LRRCT domain. The segment at 161–182 (QAERQAAPQNEKTDTPTEGPQP) is disordered.

The protein belongs to the U2 small nuclear ribonucleoprotein A family. As to quaternary structure, associated with the spliceosome.

It localises to the nucleus. Functionally, involved in pre-mRNA splicing. The chain is U2 small nuclear ribonucleoprotein A' (LEA1) from Eremothecium gossypii (strain ATCC 10895 / CBS 109.51 / FGSC 9923 / NRRL Y-1056) (Yeast).